The following is a 410-amino-acid chain: Transforming growth factor beta-3 proprotein (410 aa).

Positions 1-23 (MHLQRALVVLALLNLATISLSLS) are cleaved as a signal peptide. Residues Asn-72, Asn-133, and Asn-140 are each glycosylated (N-linked (GlcNAc...) asparagine). Residues 259 to 261 (RGD) carry the Cell attachment site motif. At Gln-291 the chain carries N5-methylglutamine. 4 cysteine pairs are disulfide-bonded: Cys-305/Cys-314, Cys-313/Cys-376, Cys-342/Cys-407, and Cys-346/Cys-409.

This sequence belongs to the TGF-beta family. In terms of assembly, interacts with ASPN. Latency-associated peptide: Homodimer; disulfide-linked. Latency-associated peptide: Interacts with Transforming growth factor beta-3 (TGF-beta-3) chain; interaction is non-covalent and maintains (TGF-beta-3) in a latent state. Latency-associated peptide: Interacts with LRRC32/GARP; leading to regulate activation of TGF-beta-3 and promote epithelial fusion during palate development. Latency-associated peptide: Interacts (via cell attachment site) with integrins, leading to release of the active TGF-beta-3. Transforming growth factor beta-3: Homodimer; disulfide-linked. Transforming growth factor beta-3: Interacts with TGF-beta receptors (TGFBR1 and TGFBR2), leading to signal transduction. Transforming growth factor beta-3 proprotein: The precursor proprotein is cleaved in the Golgi apparatus to form Transforming growth factor beta-3 (TGF-beta-3) and Latency-associated peptide (LAP) chains, which remain non-covalently linked, rendering TGF-beta-3 inactive. In terms of processing, methylated at Gln-291 by N6AMT1. Expressed in mammary glands with a slight increase in expression prior to lactation and again increasing at the onset of involution, expression peaks at day 3 of involution.

It is found in the secreted. The protein resides in the extracellular space. It localises to the extracellular matrix. Its function is as follows. Transforming growth factor beta-3 proprotein: Precursor of the Latency-associated peptide (LAP) and Transforming growth factor beta-3 (TGF-beta-3) chains, which constitute the regulatory and active subunit of TGF-beta-3, respectively. Functionally, required to maintain the Transforming growth factor beta-3 (TGF-beta-3) chain in a latent state during storage in extracellular matrix. Associates non-covalently with TGF-beta-3 and regulates its activation via interaction with 'milieu molecules', such as LTBP1 and LRRC32/GARP, that control activation of TGF-beta-3. Interaction with integrins results in distortion of the Latency-associated peptide chain and subsequent release of the active TGF-beta-3. Transforming growth factor beta-3: Multifunctional protein that regulates embryogenesis and cell differentiation and is required in various processes such as secondary palate development. Activation into mature form follows different steps: following cleavage of the proprotein in the Golgi apparatus, Latency-associated peptide (LAP) and Transforming growth factor beta-3 (TGF-beta-3) chains remain non-covalently linked rendering TGF-beta-3 inactive during storage in extracellular matrix. At the same time, LAP chain interacts with 'milieu molecules', such as LTBP1 and LRRC32/GARP that control activation of TGF-beta-3 and maintain it in a latent state during storage in extracellular milieus. TGF-beta-3 is released from LAP by integrins: integrin-binding results in distortion of the LAP chain and subsequent release of the active TGF-beta-3. Once activated following release of LAP, TGF-beta-3 acts by binding to TGF-beta receptors (TGFBR1 and TGFBR2), which transduce signal. The polypeptide is Transforming growth factor beta-3 proprotein (Mus musculus (Mouse)).